Consider the following 234-residue polypeptide: Carboxy-S-adenosyl-L-methionine synthase (234 aa).

S-adenosyl-L-methionine contacts are provided by residues Y35, 60 to 62, 83 to 84, 109 to 110, N124, and R191; these read GCS, DN, and DI.

This sequence belongs to the class I-like SAM-binding methyltransferase superfamily. Cx-SAM synthase family. Homodimer.

It catalyses the reaction prephenate + S-adenosyl-L-methionine = carboxy-S-adenosyl-L-methionine + 3-phenylpyruvate + H2O. Its function is as follows. Catalyzes the conversion of S-adenosyl-L-methionine (SAM) to carboxy-S-adenosyl-L-methionine (Cx-SAM). The protein is Carboxy-S-adenosyl-L-methionine synthase of Campylobacter concisus (strain 13826).